The primary structure comprises 109 residues: Guanylate cyclase activator 2B (109 aa).

A signal peptide spans 1–23 (MKVLALPVAVAAMLLVLAQNTQS). Positions 24–94 (VYIQYEGFQV…NIFRALRSIS (71 aa)) are excised as a propeptide. Cystine bridges form between cysteine 65/cysteine 78, cysteine 98/cysteine 106, and cysteine 101/cysteine 109.

It belongs to the guanylin family. Small and large intestine and atria and ventricles of heart. Both uroguanylin and prouroguanylin are found in plasma.

The protein localises to the secreted. Functionally, endogenous activator of intestinal guanylate cyclase. It stimulates this enzyme through the same receptor binding region as the heat-stable enterotoxins. May be a potent physiological regulator of intestinal fluid and electrolyte transport. May be an autocrine/paracrine regulator of intestinal salt and water transport. This is Guanylate cyclase activator 2B (GUCA2B) from Didelphis virginiana (North American opossum).